We begin with the raw amino-acid sequence, 181 residues long: Translation initiation factor IF-3, chloroplastic (181 aa).

Belongs to the IF-3 family. As to quaternary structure, monomer.

It is found in the plastid. Its subcellular location is the chloroplast. Functionally, IF-3 binds to the 30S ribosomal subunit and shifts the equilibrium between 70S ribosomes and their 50S and 30S subunits in favor of the free subunits, thus enhancing the availability of 30S subunits on which protein synthesis initiation begins. The sequence is that of Translation initiation factor IF-3, chloroplastic from Gracilaria tenuistipitata var. liui (Red alga).